The following is a 619-amino-acid chain: Kinesin light chain 4 (619 aa).

N-acetylserine is present on Ser2. Residues 55–88 form a TPR 1 repeat; that stretch reads QQGGHEEGLVHEKARQLRRSMENIELGLSEAQVM. A coiled-coil region spans residues 65 to 155; sequence HEKARQLRRS…HLEFLRQLRQ (91 aa). Positions 156–175 are enriched in basic and acidic residues; it reads YDEDGHGMEEKEGEATKDSL. The disordered stretch occupies residues 156–199; that stretch reads YDEDGHGMEEKEGEATKDSLDDLFPNEEEEDSGNDLSRGQGAAA. Phosphoserine is present on Ser174. Residues 179–188 show a composition bias toward acidic residues; sequence FPNEEEEDSG. TPR repeat units follow at residues 211–244, 253–286, 295–328, 337–370, and 379–412; these read LRTL…LERT, ATML…REST, AATL…REKV, AKQL…YESQ, and ARTK…AHVQ. The residue at position 460 (Ser460) is a Phosphoserine. The TPR 7 repeat unit spans residues 464–497; the sequence is NTTLKNLGALYRRQGKLEAAETLEECALRSRKQG. Phosphoserine is present on residues Ser565, Ser566, and Ser590. Residues 571-619 are disordered; it reads RKLQGTEPRPSSSSMKRAASLNYLNQPNAAPLQVSRGLSASTVDLSSSS. Positions 609-619 are enriched in low complexity; that stretch reads SASTVDLSSSS. A Phosphothreonine modification is found at Thr612.

This sequence belongs to the kinesin light chain family. In terms of assembly, oligomeric complex composed of two heavy chains and two light chains.

The protein localises to the cytoplasm. Its subcellular location is the cytoskeleton. Kinesin is a microtubule-associated force-producing protein that may play a role in organelle transport. The light chain may function in coupling of cargo to the heavy chain or in the modulation of its ATPase activity. The polypeptide is Kinesin light chain 4 (Klc4) (Mus musculus (Mouse)).